A 481-amino-acid polypeptide reads, in one-letter code: Glutamyl-tRNA(Gln) amidotransferase subunit A (481 aa).

Active-site charge relay system residues include Lys-78 and Ser-153. The Acyl-ester intermediate role is filled by Ser-177.

The protein belongs to the amidase family. GatA subfamily. As to quaternary structure, heterotrimer of A, B and C subunits.

The catalysed reaction is L-glutamyl-tRNA(Gln) + L-glutamine + ATP + H2O = L-glutaminyl-tRNA(Gln) + L-glutamate + ADP + phosphate + H(+). Allows the formation of correctly charged Gln-tRNA(Gln) through the transamidation of misacylated Glu-tRNA(Gln) in organisms which lack glutaminyl-tRNA synthetase. The reaction takes place in the presence of glutamine and ATP through an activated gamma-phospho-Glu-tRNA(Gln). This is Glutamyl-tRNA(Gln) amidotransferase subunit A from Borrelia garinii subsp. bavariensis (strain ATCC BAA-2496 / DSM 23469 / PBi) (Borreliella bavariensis).